We begin with the raw amino-acid sequence, 866 residues long: Translation initiation factor IF-2 (866 aa).

Disordered regions lie at residues 1–63 (MTND…AAVQ) and 92–257 (VVRA…RGRS). The span at 26 to 36 (ETGQVRQSFSH) shows a compositional bias: polar residues. Basic and acidic residues predominate over residues 92–135 (VVRAAEEAERKRLEEIERRRREEEEARLKVEEEARRKAEEEAAR). 2 stretches are compositionally biased toward low complexity: residues 152–164 (VAPA…AAPQ) and 179–197 (PDAS…TEAP). The region spanning 365 to 533 (SRPPVVTVMG…AILLQSEILD (169 aa)) is the tr-type G domain. The G1 stretch occupies residues 374-381 (GHVDHGKT). GTP is bound at residue 374 to 381 (GHVDHGKT). Positions 399 to 403 (GITQH) are G2. The interval 421 to 424 (DTPG) is G3. Residues 421–425 (DTPGH) and 475–478 (NKMD) contribute to the GTP site. The segment at 475–478 (NKMD) is G4. Residues 511–513 (SAK) are G5.

Belongs to the TRAFAC class translation factor GTPase superfamily. Classic translation factor GTPase family. IF-2 subfamily.

It is found in the cytoplasm. One of the essential components for the initiation of protein synthesis. Protects formylmethionyl-tRNA from spontaneous hydrolysis and promotes its binding to the 30S ribosomal subunits. Also involved in the hydrolysis of GTP during the formation of the 70S ribosomal complex. The polypeptide is Translation initiation factor IF-2 (Rhodospirillum rubrum (strain ATCC 11170 / ATH 1.1.1 / DSM 467 / LMG 4362 / NCIMB 8255 / S1)).